The following is an 871-amino-acid chain: MFSSDELRENYLKFFEEKGHKRIVSSSLIPHNDPTLLLTTAGMVQFKPYYMGVAKPENPRMASCQKCFRTTDIESVGDASHLTMFEMLGNFSIGNYFKKEAIAWAWEYVTQRLNIPAERLWITVYLDDDEAIALWKEQGVPENRIVRLGAADNFWGPAGDSGPCGPCSEIHYDFGQETGCGKADCNPSCKCGRFCEIWNLVFVQFNQDKSGKRQNLPAPSIDTGMGLERLTILMQSKKNVYETDIFAPIVEKACLLSGRKYGCDAATDRALRIVSEHSRGITFLIADGVIPDKAGRGYVLRRLLRRAVLFGRRLGLERPFLVDMAGAVINRMSGIYPELKKRQTYVLEMIASEEARFSETLATGLELLEEIVRQTKGGRISGQDAFKLYDTYGFPVEMTTEIAAEKGLSVDLDGFESEMEIQRTKARSSRKFSFDAAATAEAVKNMRHAEKTCFVGYELAIQKSTIKDILTEGGTVDSIEEGDEASIVLDESPFYAEMGGQVGDTGEIITGGGRFEVKNTLHLPNGVFLHQGRVINGCLKISEAATAHINEERRRDIARNHTATHILQTALREVLGEQVQQRGSVVTPDRLRFDFSHLKPMSKDEMRRVEEFVNDKIRRNLPVYAEEMPYRHALEEGVTALFGEKYGDRVRVLRVGRPAVSAELCGGTHVTASGEIALFKIMSESSVGAGLRRIEAVTGREAEAFINLQQDSLSELSGMLESTAEESPRKLAELKEEIDTLKKAVQNLERQMSRGEAEELLSKAEDYKGVKLLVSRMTSVNADTLRETADFLRDKLGSGVIVLGTVTEDKPFFLCMVTPDLIAKGYHAGNIVKKLSQIAGGGGGGKPNMAQGGGRDKSKLDEALQAVKGMI.

The Zn(2+) site is built by H561, H565, C665, and H669.

It belongs to the class-II aminoacyl-tRNA synthetase family. It depends on Zn(2+) as a cofactor.

The protein resides in the cytoplasm. It catalyses the reaction tRNA(Ala) + L-alanine + ATP = L-alanyl-tRNA(Ala) + AMP + diphosphate. In terms of biological role, catalyzes the attachment of alanine to tRNA(Ala) in a two-step reaction: alanine is first activated by ATP to form Ala-AMP and then transferred to the acceptor end of tRNA(Ala). Also edits incorrectly charged Ser-tRNA(Ala) and Gly-tRNA(Ala) via its editing domain. This Dehalococcoides mccartyi (strain CBDB1) protein is Alanine--tRNA ligase.